Reading from the N-terminus, the 261-residue chain is tRNA (guanine-N(7)-)-methyltransferase (261 aa).

Residues Glu-75, Glu-100, Asp-127, and Asp-150 each contribute to the S-adenosyl-L-methionine site. Residue Asp-150 is part of the active site. Lys-154 contacts substrate. The interaction with RNA stretch occupies residues 156 to 161 (RHNKRR). Residues Asp-186 and 223 to 226 (THFE) contribute to the substrate site.

Belongs to the class I-like SAM-binding methyltransferase superfamily. TrmB family.

The enzyme catalyses guanosine(46) in tRNA + S-adenosyl-L-methionine = N(7)-methylguanosine(46) in tRNA + S-adenosyl-L-homocysteine. The protein operates within tRNA modification; N(7)-methylguanine-tRNA biosynthesis. Functionally, catalyzes the formation of N(7)-methylguanine at position 46 (m7G46) in tRNA. The chain is tRNA (guanine-N(7)-)-methyltransferase from Xanthomonas campestris pv. campestris (strain 8004).